The primary structure comprises 186 residues: Tetratricopeptide repeat protein 36 (186 aa).

TPR repeat units follow at residues 48 to 81 (SKAL…LPDR), 83 to 115 (SAYN…SGGR), and 120 to 153 (RQSF…GSPF).

Belongs to the TTC36 family.

In Mus musculus (Mouse), this protein is Tetratricopeptide repeat protein 36 (Ttc36).